Consider the following 495-residue polypeptide: Autoinducer 2 import ATP-binding protein LsrA (495 aa).

ABC transporter domains are found at residues 5–233 (IEAH…TPVS) and 256–494 (AQDF…FGGQ). Position 37-44 (37-44 (GGNGAGKS)) interacts with ATP.

The protein belongs to the ABC transporter superfamily. AI-2 autoinducer porter (TC 3.A.1.2.8) family. The complex is composed of two ATP-binding proteins (LsrA), two transmembrane proteins (LsrC and LsrD) and a solute-binding protein (LsrB).

It is found in the cell inner membrane. It carries out the reaction ATP + H2O + (2R,4S)-2-methyl-2,3,3,4-tetrahydroxytetrahydrofuran-[AI-2-binding protein]Side 1 = ADP + phosphate + (2R,4S)-2-methyl-2,3,3,4-tetrahydroxytetrahydrofuranSide 2 + [AI-2-binding protein]Side 1.. Part of the ABC transporter complex LsrABCD involved in autoinducer 2 (AI-2) import. Responsible for energy coupling to the transport system. This Enterobacter sp. (strain 638) protein is Autoinducer 2 import ATP-binding protein LsrA (lsrA).